Here is a 443-residue protein sequence, read N- to C-terminus: ATP-dependent protease ATPase subunit HslU (443 aa).

ATP-binding positions include Ile-18, 60–65 (GVGKTE), Asp-256, Glu-321, and Arg-393.

The protein belongs to the ClpX chaperone family. HslU subfamily. In terms of assembly, a double ring-shaped homohexamer of HslV is capped on each side by a ring-shaped HslU homohexamer. The assembly of the HslU/HslV complex is dependent on binding of ATP.

It localises to the cytoplasm. Its function is as follows. ATPase subunit of a proteasome-like degradation complex; this subunit has chaperone activity. The binding of ATP and its subsequent hydrolysis by HslU are essential for unfolding of protein substrates subsequently hydrolyzed by HslV. HslU recognizes the N-terminal part of its protein substrates and unfolds these before they are guided to HslV for hydrolysis. The chain is ATP-dependent protease ATPase subunit HslU from Shigella dysenteriae serotype 1 (strain Sd197).